A 231-amino-acid chain; its full sequence is 2,3,4,5-tetrahydropyridine-2,6-dicarboxylate N-acetyltransferase (231 aa).

It belongs to the transferase hexapeptide repeat family. DapH subfamily.

It carries out the reaction (S)-2,3,4,5-tetrahydrodipicolinate + acetyl-CoA + H2O = L-2-acetamido-6-oxoheptanedioate + CoA. It functions in the pathway amino-acid biosynthesis; L-lysine biosynthesis via DAP pathway; LL-2,6-diaminopimelate from (S)-tetrahydrodipicolinate (acetylase route): step 1/3. Functionally, catalyzes the transfer of an acetyl group from acetyl-CoA to tetrahydrodipicolinate. In Thermosipho melanesiensis (strain DSM 12029 / CIP 104789 / BI429), this protein is 2,3,4,5-tetrahydropyridine-2,6-dicarboxylate N-acetyltransferase.